We begin with the raw amino-acid sequence, 462 residues long: Cathepsin F (462 aa).

The first 19 residues, 1 to 19 (MAPLLQLLWLLTLLSTVAL), serve as a signal peptide directing secretion. Residues 20-248 (SPVPAKPWAD…MSPAKSINDL (229 aa)) constitute a propeptide, activation peptide. 3 N-linked (GlcNAc...) asparagine glycosylation sites follow: Asn35, Asn138, and Asn173. Disulfide bonds link Cys270/Cys311 and Cys304/Cys344. Residue Cys273 is part of the active site. Residues Asn345 and Asn356 are each glycosylated (N-linked (GlcNAc...) asparagine). A disulfide bond links Cys402 and Cys450. The active site involves His409. Asn418 is a glycosylation site (N-linked (GlcNAc...) asparagine). Asn429 is a catalytic residue.

The protein belongs to the peptidase C1 family.

The protein localises to the lysosome. It carries out the reaction The recombinant enzyme cleaves synthetic substrates with Phe and Leu (better than Val) in P2, with high specificity constant (kcat/Km) comparable to that of cathepsin L.. In terms of biological role, thiol protease which is believed to participate in intracellular degradation and turnover of proteins. Has also been implicated in tumor invasion and metastasis. This chain is Cathepsin F (Ctsf), found in Mus musculus (Mouse).